The primary structure comprises 206 residues: Thymidylate kinase (206 aa).

Residue 11–18 (GIDGAGKT) participates in ATP binding.

This sequence belongs to the thymidylate kinase family.

The catalysed reaction is dTMP + ATP = dTDP + ADP. Phosphorylation of dTMP to form dTDP in both de novo and salvage pathways of dTTP synthesis. This Burkholderia pseudomallei (strain 1106a) protein is Thymidylate kinase.